Here is a 269-residue protein sequence, read N- to C-terminus: Formamidopyrimidine-DNA glycosylase (269 aa).

Pro2 serves as the catalytic Schiff-base intermediate with DNA. Glu3 serves as the catalytic Proton donor. Residue Lys57 is the Proton donor; for beta-elimination activity of the active site. His90, Arg109, and Lys150 together coordinate DNA. The FPG-type zinc-finger motif lies at 235-269 (QVYGRKGEPCRVCGTPIVATKHAQRATFYCRQCQK). The active-site Proton donor; for delta-elimination activity is the Arg259.

Belongs to the FPG family. As to quaternary structure, monomer. Requires Zn(2+) as cofactor.

It carries out the reaction Hydrolysis of DNA containing ring-opened 7-methylguanine residues, releasing 2,6-diamino-4-hydroxy-5-(N-methyl)formamidopyrimidine.. It catalyses the reaction 2'-deoxyribonucleotide-(2'-deoxyribose 5'-phosphate)-2'-deoxyribonucleotide-DNA = a 3'-end 2'-deoxyribonucleotide-(2,3-dehydro-2,3-deoxyribose 5'-phosphate)-DNA + a 5'-end 5'-phospho-2'-deoxyribonucleoside-DNA + H(+). In terms of biological role, involved in base excision repair of DNA damaged by oxidation or by mutagenic agents. Acts as a DNA glycosylase that recognizes and removes damaged bases. Has a preference for oxidized purines, such as 7,8-dihydro-8-oxoguanine (8-oxoG). Has AP (apurinic/apyrimidinic) lyase activity and introduces nicks in the DNA strand. Cleaves the DNA backbone by beta-delta elimination to generate a single-strand break at the site of the removed base with both 3'- and 5'-phosphates. The polypeptide is Formamidopyrimidine-DNA glycosylase (Escherichia coli O6:H1 (strain CFT073 / ATCC 700928 / UPEC)).